A 299-amino-acid polypeptide reads, in one-letter code: Oxygen-dependent coproporphyrinogen-III oxidase (299 aa).

Residue S92 coordinates substrate. A divalent metal cation contacts are provided by H96 and H106. H106 (proton donor) is an active-site residue. A substrate-binding site is contributed by 108-110; the sequence is NVR. H145 and H175 together coordinate a divalent metal cation. Residues 240–275 are important for dimerization; it reads YVEFNLVWDRGTLFGLQTGGRTESILMSMPPLVRWE. A substrate-binding site is contributed by 258–260; it reads GGR.

The protein belongs to the aerobic coproporphyrinogen-III oxidase family. In terms of assembly, homodimer. It depends on a divalent metal cation as a cofactor.

The protein localises to the cytoplasm. It carries out the reaction coproporphyrinogen III + O2 + 2 H(+) = protoporphyrinogen IX + 2 CO2 + 2 H2O. The protein operates within porphyrin-containing compound metabolism; protoporphyrin-IX biosynthesis; protoporphyrinogen-IX from coproporphyrinogen-III (O2 route): step 1/1. Functionally, involved in the heme biosynthesis. Catalyzes the aerobic oxidative decarboxylation of propionate groups of rings A and B of coproporphyrinogen-III to yield the vinyl groups in protoporphyrinogen-IX. This Salmonella schwarzengrund (strain CVM19633) protein is Oxygen-dependent coproporphyrinogen-III oxidase.